Here is a 417-residue protein sequence, read N- to C-terminus: Phosphoglycerate kinase (417 aa).

Substrate is bound by residues 24–26 (DLN), R44, 67–70 (HLGR), R126, and R170. ATP-binding positions include K220, G316, E347, and 373 to 376 (GGDS).

It belongs to the phosphoglycerate kinase family. In terms of assembly, monomer.

The protein localises to the cytoplasm. It catalyses the reaction (2R)-3-phosphoglycerate + ATP = (2R)-3-phospho-glyceroyl phosphate + ADP. It functions in the pathway carbohydrate degradation; glycolysis; pyruvate from D-glyceraldehyde 3-phosphate: step 2/5. This chain is Phosphoglycerate kinase, found in Renibacterium salmoninarum (strain ATCC 33209 / DSM 20767 / JCM 11484 / NBRC 15589 / NCIMB 2235).